A 423-amino-acid chain; its full sequence is Tyrosine--tRNA ligase (423 aa).

Tyr35 contributes to the L-tyrosine binding site. The 'HIGH' region signature appears at 40–49 (PTAPSLHAGH). Residues Tyr170 and Gln174 each coordinate L-tyrosine. A 'KMSKS' region motif is present at residues 230–234 (KFGKS). Lys233 is an ATP binding site. The 58-residue stretch at 355 to 412 (DLITDLLVATGLSASKGAARRTIAEGGVSVNNVKIDSDEWTPQASDFLHGRWLVLRRG) folds into the S4 RNA-binding domain.

This sequence belongs to the class-I aminoacyl-tRNA synthetase family. TyrS type 1 subfamily. In terms of assembly, homodimer.

The protein localises to the cytoplasm. It carries out the reaction tRNA(Tyr) + L-tyrosine + ATP = L-tyrosyl-tRNA(Tyr) + AMP + diphosphate + H(+). Functionally, catalyzes the attachment of tyrosine to tRNA(Tyr) in a two-step reaction: tyrosine is first activated by ATP to form Tyr-AMP and then transferred to the acceptor end of tRNA(Tyr). The polypeptide is Tyrosine--tRNA ligase (Mycobacterium sp. (strain JLS)).